Reading from the N-terminus, the 221-residue chain is PKHD-type hydroxylase P9515_13321 (221 aa).

In terms of domain architecture, Fe2OG dioxygenase spans 80–174 (TIHGIMFTKS…RLVCVGWIES (95 aa)). Residues His-98, Asp-100, and His-155 each coordinate Fe cation. A 2-oxoglutarate-binding site is contributed by Arg-165.

Fe(2+) serves as cofactor. It depends on L-ascorbate as a cofactor.

This is PKHD-type hydroxylase P9515_13321 from Prochlorococcus marinus (strain MIT 9515).